The chain runs to 792 residues: Phenylalanine--tRNA ligase beta subunit (792 aa).

Residues 39–147 form the tRNA-binding domain; it reads GESLGQVVVA…DDAPVGQALA (109 aa). In terms of domain architecture, B5 spans 400-475; sequence PQPARILLRR…RIHGYDRVPT (76 aa). Mg(2+) contacts are provided by Asp-453, Asp-459, Glu-462, and Asp-463. Positions 698–791 constitute an FDX-ACB domain; it reads SRFPSVRRDL…IEREHRARIR (94 aa).

The protein belongs to the phenylalanyl-tRNA synthetase beta subunit family. Type 1 subfamily. Tetramer of two alpha and two beta subunits. Mg(2+) serves as cofactor.

It localises to the cytoplasm. It carries out the reaction tRNA(Phe) + L-phenylalanine + ATP = L-phenylalanyl-tRNA(Phe) + AMP + diphosphate + H(+). The chain is Phenylalanine--tRNA ligase beta subunit from Xanthomonas oryzae pv. oryzae (strain MAFF 311018).